Consider the following 544-residue polypeptide: Chaperonin GroEL (544 aa).

ATP-binding positions include 30 to 33 (TLGP), Lys51, 87 to 91 (DGTTT), Gly415, and Asp495.

This sequence belongs to the chaperonin (HSP60) family. In terms of assembly, forms a cylinder of 14 subunits composed of two heptameric rings stacked back-to-back. Interacts with the co-chaperonin GroES.

It localises to the cytoplasm. It catalyses the reaction ATP + H2O + a folded polypeptide = ADP + phosphate + an unfolded polypeptide.. In terms of biological role, together with its co-chaperonin GroES, plays an essential role in assisting protein folding. The GroEL-GroES system forms a nano-cage that allows encapsulation of the non-native substrate proteins and provides a physical environment optimized to promote and accelerate protein folding. This chain is Chaperonin GroEL, found in Neisseria gonorrhoeae (strain ATCC 700825 / FA 1090).